A 273-amino-acid chain; its full sequence is UPF0380 protein YubP (273 aa).

This sequence belongs to the UPF0380 family.

The protein is UPF0380 protein YubP (yubP) of Escherichia coli (strain K12).